Here is a 310-residue protein sequence, read N- to C-terminus: Vomeronasal type-1 receptor 44 (310 aa).

Residues 1–20 lie on the Extracellular side of the membrane; it reads MNKANLLHIDTNIKITLLAE. The helical transmembrane segment at 21 to 41 threads the bilayer; sequence VSVGISANSILFIAYLCMLLG. The Cytoplasmic portion of the chain corresponds to 42 to 50; it reads ENRHKPIDL. A helical transmembrane segment spans residues 51–71; that stretch reads YIAFLSLTQLMLLITMGLIAV. The Extracellular segment spans residues 72–93; that stretch reads DMFMPWGRWDSTTCQSLIYLHR. An intrachain disulfide couples cysteine 85 to cysteine 172. A helical transmembrane segment spans residues 94-114; it reads FLRGLTLCATCLLNVLWTITL. Residues 115–131 are Cytoplasmic-facing; sequence SSRNSCLAKFKHKYPHH. Residues 132–152 form a helical membrane-spanning segment; it reads ISGAFLFLCVLYMSFSSHFLV. Residues 153–190 are Extracellular-facing; sequence SMTVTPNLTSENFMYVTQSCSLLPMSYSRTSMFSTPVA. Residue asparagine 159 is glycosylated (N-linked (GlcNAc...) asparagine). A helical membrane pass occupies residues 191–211; it reads IRETFLISLMALSSGYMVALL. The Cytoplasmic portion of the chain corresponds to 212 to 238; it reads WRHKKQAQHLRSTSLSSKASPEQRATR. A helical membrane pass occupies residues 239-259; the sequence is TILLLMSFFVVFYILDTVIFH. Topologically, residues 260–268 are extracellular; that stretch reads SRMKFKDGS. A helical membrane pass occupies residues 269–289; the sequence is ILYCFQIIVSHSYVTVSPFVF. Topologically, residues 290–310 are cytoplasmic; the sequence is ICTEKHIIKFLRSMCGRIANI.

The protein belongs to the G-protein coupled receptor 1 family.

It is found in the cell membrane. Its function is as follows. Putative pheromone receptor implicated in the regulation of social and reproductive behavior. This chain is Vomeronasal type-1 receptor 44 (Vmn1r44), found in Mus musculus (Mouse).